Consider the following 218-residue polypeptide: Octanoyltransferase (218 aa).

One can recognise a BPL/LPL catalytic domain in the interval alanine 45–serine 218. Residues arginine 84–histidine 91, alanine 151–glycine 153, and glycine 164–alanine 166 contribute to the substrate site. Residue cysteine 182 is the Acyl-thioester intermediate of the active site.

The protein belongs to the LipB family.

Its subcellular location is the cytoplasm. The catalysed reaction is octanoyl-[ACP] + L-lysyl-[protein] = N(6)-octanoyl-L-lysyl-[protein] + holo-[ACP] + H(+). It functions in the pathway protein modification; protein lipoylation via endogenous pathway; protein N(6)-(lipoyl)lysine from octanoyl-[acyl-carrier-protein]: step 1/2. In terms of biological role, catalyzes the transfer of endogenously produced octanoic acid from octanoyl-acyl-carrier-protein onto the lipoyl domains of lipoate-dependent enzymes. Lipoyl-ACP can also act as a substrate although octanoyl-ACP is likely to be the physiological substrate. This Thiobacillus denitrificans (strain ATCC 25259 / T1) protein is Octanoyltransferase.